The sequence spans 650 residues: Putative pumilio homolog 7, chloroplastic (650 aa).

Disordered stretches follow at residues 1–22 (MDEF…RTPL) and 200–235 (NDDK…GQEI). A chloroplast-targeting transit peptide spans 1–77 (MDEFREASSV…SPPFNGIIPK (77 aa)). Low complexity-rich tracts occupy residues 8–22 (SSVS…RTPL) and 217–232 (PSYS…YNNG). Residues 308–650 (SNTRALMSNN…RIFSRNLLKK (343 aa)) form the PUM-HD domain. Pumilio repeat units follow at residues 333 to 368 (DIQG…IIFN), 369 to 404 (EVIA…QIVL), 408 to 443 (EEPG…SLVK), 445 to 480 (ALRP…FIFD), 481 to 516 (AATK…KLIA), 517 to 552 (EISR…MMLA), 553 to 591 (QLKG…ELVS), and 594 to 625 (HFDQ…SLVE).

The protein resides in the plastid. It localises to the chloroplast. It is found in the cytoplasm. Sequence-specific RNA-binding protein that regulates translation and mRNA stability by binding the 3'-UTR of target mRNAs. In Arabidopsis thaliana (Mouse-ear cress), this protein is Putative pumilio homolog 7, chloroplastic (APUM7).